Consider the following 254-residue polypeptide: MALAVRVIPCLDVDNGRVVKGVNFENLRDAGDPVELAARYGQVGADELTFLDVSASKDGRGTMLDVVRRTADQVFIPLTVGGGVRSVDDVRELLRAGADKVSVNSSAIARPELLRELADVFGSQCIVLSVDARRAADFPSGFEVTTHGGTRSAGLDAVEWAKRGEELGVGEILLNSMDGDGTKAGFDIELIEAVRAAVSVPIIASGGAGKAEHFPPAVDAGADAVLAASIFHFGEVEISEVKEALAAAGKEVRQ.

Residues D12 and D131 contribute to the active site.

The protein belongs to the HisA/HisF family. Heterodimer of HisH and HisF.

It is found in the cytoplasm. The catalysed reaction is 5-[(5-phospho-1-deoxy-D-ribulos-1-ylimino)methylamino]-1-(5-phospho-beta-D-ribosyl)imidazole-4-carboxamide + L-glutamine = D-erythro-1-(imidazol-4-yl)glycerol 3-phosphate + 5-amino-1-(5-phospho-beta-D-ribosyl)imidazole-4-carboxamide + L-glutamate + H(+). It participates in amino-acid biosynthesis; L-histidine biosynthesis; L-histidine from 5-phospho-alpha-D-ribose 1-diphosphate: step 5/9. Functionally, IGPS catalyzes the conversion of PRFAR and glutamine to IGP, AICAR and glutamate. The HisF subunit catalyzes the cyclization activity that produces IGP and AICAR from PRFAR using the ammonia provided by the HisH subunit. The protein is Imidazole glycerol phosphate synthase subunit HisF of Corynebacterium aurimucosum (strain ATCC 700975 / DSM 44827 / CIP 107346 / CN-1) (Corynebacterium nigricans).